The sequence spans 442 residues: F-box/kelch-repeat protein OR23 (442 aa).

An F-box domain is found at 37-84 (TLIPGLSNDVGRLILSFVPYPHISRIKSTCKSWYAFLSSKTLISLRHS). 6 Kelch repeats span residues 93–139 (LSHL…NFVA), 145–200 (YVYV…AMPG), 204–257 (RIIV…LVEN), 269–328 (EFWV…KIVA), 330–377 (DCGK…ALNG), and 390–437 (LMDT…TTVM).

This is F-box/kelch-repeat protein OR23 (OR23) from Arabidopsis thaliana (Mouse-ear cress).